A 748-amino-acid chain; its full sequence is Cytosolic phospholipase A2 (748 aa).

A phospholipid binding region spans residues 1–178 (MSFIDPYQHI…MRKLLGPKKS (178 aa)). Serine 2 is modified (phosphoserine). The 117-residue stretch at 6 to 122 (PYQHIIVEHQ…KVGEKKEVPF (117 aa)) folds into the C2 domain. Ca(2+) contacts are provided by aspartate 40, threonine 41, aspartate 43, asparagine 65, aspartate 93, alanine 94, and asparagine 95. A PLA2c domain is found at 138 to 739 (VCSSPDLRFS…SNVEARRFFN (602 aa)). The active-site Nucleophile is serine 228. The residue at position 268 (threonine 268) is a Phosphothreonine. The segment at 428 to 458 (HIVSNDSSDSDDESQEPKGTEGEDAEREYQN) is disordered. Residues serine 434, serine 435, and serine 437 each carry the phosphoserine modification. Positions 442–458 (QEPKGTEGEDAEREYQN) are enriched in basic and acidic residues. Residue serine 505 is modified to Phosphoserine; by MAPK. At serine 514 the chain carries Phosphoserine. Lysine 540 participates in a covalent cross-link: Glycyl lysine isopeptide (Lys-Gly) (interchain with G-Cter in SUMO2). Aspartate 548 acts as the Proton acceptor in catalysis. Residue lysine 605 forms a Glycyl lysine isopeptide (Lys-Gly) (interchain with G-Cter in SUMO2) linkage. Residues serine 726 and serine 728 each carry the phosphoserine modification.

In terms of assembly, interacts with KAT5. Phosphorylated at both Ser-505 and Ser-726 in response to mitogenic stimuli.

It is found in the cytoplasm. Its subcellular location is the golgi apparatus membrane. It localises to the nucleus envelope. The enzyme catalyses a 1,2-diacyl-sn-glycero-3-phosphocholine + H2O = a 1-acyl-sn-glycero-3-phosphocholine + a fatty acid + H(+). It carries out the reaction a 1-O-alkyl-2-acyl-sn-glycero-3-phosphocholine + H2O = a 1-O-alkyl-sn-glycero-3-phosphocholine + a fatty acid + H(+). The catalysed reaction is a 1-acyl-sn-glycero-3-phosphocholine + H2O = sn-glycerol 3-phosphocholine + a fatty acid + H(+). It catalyses the reaction 1-hexadecanoyl-2-(5Z,8Z,11Z,14Z-eicosatetraenoyl)-sn-glycero-3-phosphocholine + H2O = 1-hexadecanoyl-sn-glycero-3-phosphocholine + (5Z,8Z,11Z,14Z)-eicosatetraenoate + H(+). The enzyme catalyses 1,2-di-(5Z,8Z,11Z,14Z-eicosatetraenoyl)-sn-glycero-3-phosphocholine + H2O = 1-(5Z,8Z,11Z,14Z-eicosatetraenoyl)-sn-glycero-3-phosphocholine + (5Z,8Z,11Z,14Z)-eicosatetraenoate + H(+). It carries out the reaction 1-octadecanoyl-2-(5Z,8Z,11Z,14Z-eicosatetraenoyl)-sn-glycero-3-phosphocholine + H2O = 1-octadecanoyl-sn-glycero-3-phosphocholine + (5Z,8Z,11Z,14Z)-eicosatetraenoate + H(+). The catalysed reaction is 1-hexadecanoyl-2-(9Z,12Z-octadecadienoyl)-sn-glycero-3-phosphocholine + H2O = (9Z,12Z)-octadecadienoate + 1-hexadecanoyl-sn-glycero-3-phosphocholine + H(+). It catalyses the reaction 1-octadecanoyl-2-(9Z,12Z,15Z-octadecatrienoyl)-sn-glycero-3-phosphocholine + H2O = (9Z,12Z,15Z)-octadecatrienoate + 1-octadecanoyl-sn-glycero-3-phosphocholine + H(+). The enzyme catalyses 1-(5Z,8Z,11Z,14Z-eicosatetraenoyl)-2-hexadecanoyl-sn-glycero-3-phosphocholine + H2O = 1-(5Z,8Z,11Z,14Z-eicosatetraenoyl)-sn-glycero-3-phosphocholine + hexadecanoate + H(+). It carries out the reaction 1-O-hexadecyl-2-(5Z,8Z,11Z,14Z)-eicosatetraenoyl-sn-glycero-3-phosphocholine + H2O = 1-O-hexadecyl-sn-glycero-3-phosphocholine + (5Z,8Z,11Z,14Z)-eicosatetraenoate + H(+). The catalysed reaction is 1,2-di-(9Z-octadecenoyl)-sn-glycero-3-phospho-(1'-sn-glycerol) + H2O = 1-(9Z-octadecenoyl)-sn-glycero-3-phospho-(1'-sn-glycerol) + (9Z)-octadecenoate + H(+). It catalyses the reaction 1-octadecanoyl-2-(5Z,8Z,11Z,14Z-eicosatetraenoyl)-sn-glycero-3-phosphate + H2O = 1-octadecanoyl-sn-glycero-3-phosphate + (5Z,8Z,11Z,14Z)-eicosatetraenoate + H(+). The enzyme catalyses 1-hexadecanoyl-sn-glycero-3-phosphocholine + H2O = sn-glycerol 3-phosphocholine + hexadecanoate + H(+). It carries out the reaction 2-(prostaglandin E2)-sn-glycero-3-phosphoethanolamine + H2O = sn-glycero-3-phosphoethanolamine + prostaglandin E2 + H(+). The catalysed reaction is 2-[(15S)-hydroxy-(5Z,8Z,11Z,13E)-eicosatetraenoyl]-sn-glycero-3-phosphocholine + H2O = (15S)-hydroxy-(5Z,8Z,11Z,13E)-eicosatetraenoate + sn-glycerol 3-phosphocholine + H(+). It catalyses the reaction 2-[(15R)-hydroxy-(5Z,8Z,11Z,13E)-eicosatetraenoyl]-sn-glycero-3-phosphocholine + H2O = (15R)-hydroxy-(5Z,8Z,11Z,13E)-eicosatetraenoate + sn-glycerol 3-phosphocholine + H(+). The enzyme catalyses 2-(prostaglandin E2)-sn-glycero-3-phosphocholine + H2O = prostaglandin E2 + sn-glycerol 3-phosphocholine + H(+). It carries out the reaction 2-[(11R)-hydroxy-(5Z,8Z,12E,14Z)-eicosatetraenoyl]-sn-glycero-3-phosphocholine + H2O = (11R)-hydroxy-(5Z,8Z,12E,14Z)-eicosatetraenoate + sn-glycerol 3-phosphocholine + H(+). The catalysed reaction is 1-(5Z,8Z,11Z,14Z-eicosatetraenoyl)-2-O-hexadecyl-sn-glycero-3-phosphocholine + H2O = 2-O-hexadecyl-sn-glycero-3-phosphocholine + (5Z,8Z,11Z,14Z)-eicosatetraenoate + H(+). It catalyses the reaction 1-octadecanoyl-2-(5Z,8Z,11Z,14Z-eicosatetraenoyl)-sn-glycero-3-phosphocholine + glycerol = 1-(5Z,8Z,11Z,14Z-eicosatetraenoyl)-glycerol + 1-octadecanoyl-sn-glycero-3-phosphocholine. The enzyme catalyses 1-octadecanoyl-2-(9Z,12Z,15Z-octadecatrienoyl)-sn-glycero-3-phosphocholine + glycerol = 1-(9Z,12Z,15Z-octadecatrienoyl)-glycerol + 1-octadecanoyl-sn-glycero-3-phosphocholine. Its pathway is membrane lipid metabolism; glycerophospholipid metabolism. It participates in lipid metabolism; arachidonate metabolism. The protein operates within lipid metabolism; prostaglandin biosynthesis. It functions in the pathway lipid metabolism; leukotriene B4 biosynthesis. Its activity is regulated as follows. Activated by cytosolic calcium, which is necessary for binding to membrane lipids. Activated by phosphorylation in response to mitogenic stimuli. Has primarily calcium-dependent phospholipase and lysophospholipase activities, with a major role in membrane lipid remodeling and biosynthesis of lipid mediators of the inflammatory response. Plays an important role in embryo implantation and parturition through its ability to trigger prostanoid production. Preferentially hydrolyzes the ester bond of the fatty acyl group attached at sn-2 position of phospholipids (phospholipase A2 activity). Selectively hydrolyzes sn-2 arachidonoyl group from membrane phospholipids, providing the precursor for eicosanoid biosynthesis via the cyclooxygenase pathway. In an alternative pathway of eicosanoid biosynthesis, hydrolyzes sn-2 fatty acyl chain of eicosanoid lysophopholipids to release free bioactive eicosanoids. Hydrolyzes the ester bond of the fatty acyl group attached at sn-1 position of phospholipids (phospholipase A1 activity) only if an ether linkage rather than an ester linkage is present at the sn-2 position. This hydrolysis is not stereospecific. Has calcium-independent phospholipase A2 and lysophospholipase activities in the presence of phosphoinositides. Has O-acyltransferase activity. Catalyzes the transfer of fatty acyl chains from phospholipids to a primary hydroxyl group of glycerol (sn-1 or sn-3), potentially contributing to monoacylglycerol synthesis. This Oryctolagus cuniculus (Rabbit) protein is Cytosolic phospholipase A2 (PLA2G4A).